Reading from the N-terminus, the 76-residue chain is Small ribosomal subunit protein bS21C (76 aa).

Residues 52–76 (GRQRKLARKQMQREGLLPTKPRKDK) form a disordered region.

The protein belongs to the bacterial ribosomal protein bS21 family.

The polypeptide is Small ribosomal subunit protein bS21C (rpsU3) (Agrobacterium fabrum (strain C58 / ATCC 33970) (Agrobacterium tumefaciens (strain C58))).